Reading from the N-terminus, the 210-residue chain is MVRGKIEMKKIENATSRQVTFSKRRNGLLKKAYELSVLCDAQLSLIIFSQRGRLYEFSSSDMQKTIERYRKYTKDHETSNHDSQIHLQQLKQEASHMITKIELLEFHKRKLLGQGIASCSLEELQEIDSQLQRSLGKVRERKAQLFKEQLEKLKAKEKQLLEENVKLHQKNVINPWRGSSTDQQQEKYKVIDLNLEVETDLFIGLPNRNC.

An MADS-box domain is found at Met-1 to Asp-61. A K-box domain is found at Leu-87 to Arg-177.

In terms of tissue distribution, expressed in quiescent center (QC) cells of root tips. Expressed at the base of the petiole of cotyledons and leaves, in flower buds, petals, sepals and abscission zone of flowers and siliques.

It localises to the nucleus. MADS-box transcription factor that acts with AGL71 and AGL72 in the control of flowering time. Promotes flowering at the shoot apical and axillary meristems. Seems to act through a gibberellin-dependent pathway. Interacts genetically with SOC1 and its expression is directly regulated by SOC1. Plays a role in controlling flower organ senescence and abscission by repressing ethylene responses and regulating the expression of BOP2 and IDA. The protein is MADS-box protein AGL42 (AGL42) of Arabidopsis thaliana (Mouse-ear cress).